Reading from the N-terminus, the 333-residue chain is MLKHLSEKFIYYMAEYFFEFEKRKHYYKLANNLYNSYLKGKKFNRSLLKKVKEDLNLWIDNPNQIQVYSRFLNEVEKEGVKSFGEGLAIIPLINLYREVWRELEEEQNKVEKLREYILKLDSCEICTRGLEGEEFFNCLTQNVDFLTATHIANFFFEEEFLPLNEEIAQILNISKENYFEVIKKLKGANLKNLYGALYVLLQRDSVKVNHVKRLLGISREAELLKEAQYAWNTGDFYRAHEILEEVWGLFKNEEIKKCYRGLIRAAIALHRFKEGNPQSGANVVKQALLDMANCPDNFRGINLGEIRAYLEEVLGTKEIGNPPELKYNIKSEE.

Positions 94–122 (NLYREVWRELEEEQNKVEKLREYILKLDS) form a coiled coil.

This is an uncharacterized protein from Aquifex aeolicus (strain VF5).